Reading from the N-terminus, the 176-residue chain is Peptide deformylase 2 (176 aa).

Residues cysteine 99 and histidine 141 each contribute to the Fe cation site. Residue glutamate 142 is part of the active site. Residue histidine 145 coordinates Fe cation.

The protein belongs to the polypeptide deformylase family. The cofactor is Fe(2+).

The catalysed reaction is N-terminal N-formyl-L-methionyl-[peptide] + H2O = N-terminal L-methionyl-[peptide] + formate. Removes the formyl group from the N-terminal Met of newly synthesized proteins. Requires at least a dipeptide for an efficient rate of reaction. N-terminal L-methionine is a prerequisite for activity but the enzyme has broad specificity at other positions. This chain is Peptide deformylase 2, found in Bordetella bronchiseptica (strain ATCC BAA-588 / NCTC 13252 / RB50) (Alcaligenes bronchisepticus).